The primary structure comprises 107 residues: Integration host factor subunit alpha (107 aa).

It belongs to the bacterial histone-like protein family. In terms of assembly, heterodimer of an alpha and a beta chain.

Its function is as follows. This protein is one of the two subunits of integration host factor, a specific DNA-binding protein that functions in genetic recombination as well as in transcriptional and translational control. In Brucella suis (strain ATCC 23445 / NCTC 10510), this protein is Integration host factor subunit alpha.